A 426-amino-acid chain; its full sequence is Enolase (426 aa).

Residues 32–53 (TGRAAVPSGASTGAYEAHEQRD) are disordered. A (2R)-2-phosphoglycerate-binding site is contributed by Q163. E205 acts as the Proton donor in catalysis. D242, E285, and D312 together coordinate Mg(2+). (2R)-2-phosphoglycerate is bound by residues K337, R366, S367, and K388. The active-site Proton acceptor is K337.

The protein belongs to the enolase family. Mg(2+) serves as cofactor.

The protein resides in the cytoplasm. Its subcellular location is the secreted. It localises to the cell surface. The catalysed reaction is (2R)-2-phosphoglycerate = phosphoenolpyruvate + H2O. Its pathway is carbohydrate degradation; glycolysis; pyruvate from D-glyceraldehyde 3-phosphate: step 4/5. Functionally, catalyzes the reversible conversion of 2-phosphoglycerate (2-PG) into phosphoenolpyruvate (PEP). It is essential for the degradation of carbohydrates via glycolysis. The polypeptide is Enolase (Hyphomonas neptunium (strain ATCC 15444)).